The primary structure comprises 294 residues: 4-hydroxy-tetrahydrodipicolinate synthase (294 aa).

Threonine 44 is a binding site for pyruvate. Tyrosine 132 acts as the Proton donor/acceptor in catalysis. The active-site Schiff-base intermediate with substrate is lysine 160. Valine 202 lines the pyruvate pocket.

This sequence belongs to the DapA family. As to quaternary structure, homotetramer; dimer of dimers.

Its subcellular location is the cytoplasm. It catalyses the reaction L-aspartate 4-semialdehyde + pyruvate = (2S,4S)-4-hydroxy-2,3,4,5-tetrahydrodipicolinate + H2O + H(+). The protein operates within amino-acid biosynthesis; L-lysine biosynthesis via DAP pathway; (S)-tetrahydrodipicolinate from L-aspartate: step 3/4. In terms of biological role, catalyzes the condensation of (S)-aspartate-beta-semialdehyde [(S)-ASA] and pyruvate to 4-hydroxy-tetrahydrodipicolinate (HTPA). This is 4-hydroxy-tetrahydrodipicolinate synthase from Leptospira biflexa serovar Patoc (strain Patoc 1 / Ames).